The following is a 469-amino-acid chain: IME2-dependent-signaling protein (469 aa).

M1 bears the N-acetylmethionine mark. Phosphothreonine is present on T13. Disordered regions lie at residues 22–55, 67–92, and 117–143; these read KSWSESQDNPLLLNFNNSPIGTPTDRYSPEPATM, ARGSTQQQQRLYGSSQTREKSDQQQQ, and DLTLGSPEPSERASPIRQPSVDVPPLT. A phosphoserine mark is found at S23, S27, and S39. Polar residues-rich tracts occupy residues 25–42 and 67–82; these read SESQDNPLLLNFNNSPIG and ARGSTQQQQRLYGSSQ. Phosphoserine is present on residues S122, S130, S136, S147, and S148.

Its function is as follows. Seems to act indirectly to modify IME2 activity, thus permitting IME2 to carry out later meiotic functions. This is IME2-dependent-signaling protein (IDS2) from Saccharomyces cerevisiae (strain ATCC 204508 / S288c) (Baker's yeast).